Here is a 347-residue protein sequence, read N- to C-terminus: ATPase GET3 (347 aa).

26–33 (KGGVGKTT) provides a ligand contact to ATP. Residue D57 is part of the active site. The ATP site is built by E240 and N267. C279 and C282 together coordinate Zn(2+).

This sequence belongs to the arsA ATPase family. In terms of assembly, homodimer. Component of the Golgi to ER traffic (GET) complex, which is composed of GET1, GET2 and GET3. Within the complex, GET1 and GET2 form a heterotetramer which is stabilized by phosphatidylinositol binding and which binds to the GET3 homodimer. Interacts with the chloride channel protein GEF1.

The protein localises to the cytoplasm. The protein resides in the endoplasmic reticulum. Its subcellular location is the golgi apparatus. ATPase required for the post-translational delivery of tail-anchored (TA) proteins to the endoplasmic reticulum. Recognizes and selectively binds the transmembrane domain of TA proteins in the cytosol. This complex then targets to the endoplasmic reticulum by membrane-bound receptors GET1 and GET2, where the tail-anchored protein is released for insertion. This process is regulated by ATP binding and hydrolysis. ATP binding drives the homodimer towards the closed dimer state, facilitating recognition of newly synthesized TA membrane proteins. ATP hydrolysis is required for insertion. Subsequently, the homodimer reverts towards the open dimer state, lowering its affinity for the GET1-GET2 receptor, and returning it to the cytosol to initiate a new round of targeting. Cooperates with the HDEL receptor ERD2 to mediate the ATP-dependent retrieval of resident ER proteins that contain a C-terminal H-D-E-L retention signal from the Golgi to the ER. Involved in low-level resistance to the oxyanions arsenite and arsenate, and in heat tolerance. This chain is ATPase GET3, found in Scheffersomyces stipitis (strain ATCC 58785 / CBS 6054 / NBRC 10063 / NRRL Y-11545) (Yeast).